Here is a 131-residue protein sequence, read N- to C-terminus: Small ribosomal subunit protein uS8 (131 aa).

This sequence belongs to the universal ribosomal protein uS8 family. As to quaternary structure, part of the 30S ribosomal subunit. Contacts proteins S5 and S12.

Its function is as follows. One of the primary rRNA binding proteins, it binds directly to 16S rRNA central domain where it helps coordinate assembly of the platform of the 30S subunit. This chain is Small ribosomal subunit protein uS8, found in Hamiltonella defensa subsp. Acyrthosiphon pisum (strain 5AT).